The primary structure comprises 198 residues: B9 domain-containing protein 1 (198 aa).

The C2 B9-type domain occupies 8-126 (FLLNVSGQIE…TIPMFVPESS (119 aa)).

It belongs to the B9D family. As to quaternary structure, part of the tectonic-like complex (also named B9 complex).

The protein resides in the cytoplasm. It is found in the cytoskeleton. It localises to the cilium basal body. Component of the tectonic-like complex, a complex localized at the transition zone of primary cilia and acting as a barrier that prevents diffusion of transmembrane proteins between the cilia and plasma membranes. Required for ciliogenesis and sonic hedgehog/SHH signaling. In Xenopus laevis (African clawed frog), this protein is B9 domain-containing protein 1 (b9d1).